A 420-amino-acid chain; its full sequence is Protein translocase subunit SecY (420 aa).

10 helical membrane passes run 9–29, 61–81, 104–124, 141–161, 173–193, 203–223, 257–277, 300–320, 355–375, and 377–397; these read ILIT…PIPG, LSII…MELL, IVRY…SVGL, VFMI…MWIG, ISLI…SGTF, ILML…IIYV, LSGV…STIL, YNIL…SIVF, KLTL…WILV, and AMGV…QVAI.

Belongs to the SecY/SEC61-alpha family. As to quaternary structure, component of the Sec protein translocase complex. Heterotrimer consisting of SecY, SecE and SecG subunits. The heterotrimers can form oligomers, although 1 heterotrimer is thought to be able to translocate proteins. Interacts with the ribosome. Interacts with SecDF, and other proteins may be involved. Interacts with SecA.

The protein resides in the cell inner membrane. Its function is as follows. The central subunit of the protein translocation channel SecYEG. Consists of two halves formed by TMs 1-5 and 6-10. These two domains form a lateral gate at the front which open onto the bilayer between TMs 2 and 7, and are clamped together by SecE at the back. The channel is closed by both a pore ring composed of hydrophobic SecY resides and a short helix (helix 2A) on the extracellular side of the membrane which forms a plug. The plug probably moves laterally to allow the channel to open. The ring and the pore may move independently. The chain is Protein translocase subunit SecY from Helicobacter pylori (strain ATCC 700392 / 26695) (Campylobacter pylori).